The sequence spans 625 residues: SWR1-complex protein 3 (625 aa).

Disordered regions lie at residues 1 to 53 (MPAV…EVGN), 194 to 234 (KELK…KENK), 254 to 273 (KLKEQNKNKQGSPSSSMHDP), and 324 to 434 (NPVN…NAIK). Residues 20–31 (SRTRTRSRRGKR) show a composition bias toward basic residues. Acidic residues predominate over residues 35–53 (DDDDDDDEESDDAYDEVGN). 2 stretches are compositionally biased toward basic and acidic residues: residues 194–214 (KELKRKNDAEAKRLRMEERKR) and 221–234 (IAKEQKLQLQKENK). A compositionally biased stretch (polar residues) spans 261–270 (NKQGSPSSSM). Over residues 342-352 (KAKDVAEDHRL) the composition is skewed to basic and acidic residues. Positions 353-364 (NSITLVKSSKTA) are enriched in polar residues. Basic and acidic residues-rich tracts occupy residues 368–388 (PEPKKADDENAEKQQSKEAKT) and 396–420 (DVKKEEEDVKEKGVKSEDTQKKEDN).

It belongs to the SWC3 family. Component of the SWR1 chromatin remodeling complex composed of at least ACT1, ARP4, RVB1, RVB2, ARP6, YAF9, VPS71, VPS72, SWC3, SWC4, SWC5, SWC7 and SWR1, and perhaps BDF1.

It is found in the nucleus. In terms of biological role, component of the SWR1 complex which mediates the ATP-dependent exchange of histone H2A for the H2A variant HZT1 leading to transcriptional regulation of selected genes by chromatin remodeling. Involved in chromosome stability. This chain is SWR1-complex protein 3 (SWC3), found in Saccharomyces cerevisiae (strain ATCC 204508 / S288c) (Baker's yeast).